The primary structure comprises 312 residues: Cytochrome c biogenesis protein CcsA (312 aa).

Transmembrane regions (helical) follow at residues 9–29 (ILTH…LITF), 44–64 (GIIV…ISSG), 71–91 (LYES…IPYF), 111–131 (GFAT…VPAL), 143–163 (MILG…LLVI), 216–236 (VISL…VWAN), 251–271 (WAFI…NINL), and 277–297 (AIIA…VNLL).

Belongs to the CcmF/CycK/Ccl1/NrfE/CcsA family. In terms of assembly, may interact with Ccs1.

Its subcellular location is the plastid. It localises to the chloroplast thylakoid membrane. Functionally, required during biogenesis of c-type cytochromes (cytochrome c6 and cytochrome f) at the step of heme attachment. This is Cytochrome c biogenesis protein CcsA from Atropa belladonna (Belladonna).